Here is a 153-residue protein sequence, read N- to C-terminus: MAVESRVTQEEIKKEPEKPIDREKTCPLLLRVFTTNNGRHHRMDEFSRGNVPSSELQIYTWMDATLKELTSLVKEVYPEARKKGTHFNFAIVFTDLKRPGYRVKEIGSTMSGRKGTDDSMTLQSQKFQIGDYLDIAITPPNRAPPTSGRMRPY.

A disordered region spans residues M1 to I20. A2 bears the N-acetylalanine mark. The span at V7 to I20 shows a compositional bias: basic and acidic residues. A Glycyl lysine isopeptide (Lys-Gly) (interchain with G-Cter in SUMO2) cross-link involves residue K13. Residues F93 to Y153 form an involved in splicing regulation activity region.

It belongs to the SAP18 family. Found in a mRNA splicing-dependent exon junction complex (EJC). Component of the heterotrimeric ASAP (apoptosis- and splicing-associated protein) and PSAP complexes consisting of RNPS1, SAP18 and either ACIN1 or PNN, respectively; the ASAP and PSAP complexes probably are formed mutually exclusive. For the ASAP complex, the association of SAP18 seems to require a preformed RNPS1:ACIN1 complex. Forms a complex with SIN3A and HDAC1. Interacts with SUFU.

It is found in the nucleus. It localises to the cytoplasm. The protein resides in the nucleus speckle. In terms of biological role, component of the SIN3-repressing complex. Enhances the ability of SIN3-HDAC1-mediated transcriptional repression. When tethered to the promoter, it can direct the formation of a repressive complex to core histone proteins. Auxiliary component of the splicing-dependent multiprotein exon junction complex (EJC) deposited at splice junction on mRNAs. The EJC is a dynamic structure consisting of core proteins and several peripheral nuclear and cytoplasmic associated factors that join the complex only transiently either during EJC assembly or during subsequent mRNA metabolism. Component of the ASAP and PSAP complexes which bind RNA in a sequence-independent manner and are proposed to be recruited to the EJC prior to or during the splicing process and to regulate specific excision of introns in specific transcription subsets. The ASAP complex can inhibit mRNA processing during in vitro splicing reactions. The ASAP complex promotes apoptosis and is disassembled after induction of apoptosis. Involved in the splicing modulation of BCL2L1/Bcl-X (and probably other apoptotic genes); specifically inhibits the formation of proapoptotic isoforms such as Bcl-X(S); the activity is different from the established EJC assembly and function. The polypeptide is Histone deacetylase complex subunit SAP18 (SAP18) (Bos taurus (Bovine)).